The chain runs to 434 residues: Protein translocase subunit SecY (434 aa).

10 consecutive transmembrane segments (helical) span residues 19–39 (LFTL…IPGI), 73–93 (IFML…LLVY), 117–137 (YLTI…AKGI), 148–168 (YIFV…WFGE), 179–199 (TSLI…FNLF), 209–229 (VNPV…ILII), 264–284 (VLPV…LSGF), 300–320 (PNGF…TYFY), 362–382 (FSGS…QNIF), and 391–411 (IMGG…LIHI).

It belongs to the SecY/SEC61-alpha family. In terms of assembly, component of the Sec protein translocase complex. Heterotrimer consisting of SecY, SecE and SecG subunits. The heterotrimers can form oligomers, although 1 heterotrimer is thought to be able to translocate proteins. Interacts with the ribosome. Interacts with SecDF, and other proteins may be involved. Interacts with SecA.

It is found in the cell inner membrane. Functionally, the central subunit of the protein translocation channel SecYEG. Consists of two halves formed by TMs 1-5 and 6-10. These two domains form a lateral gate at the front which open onto the bilayer between TMs 2 and 7, and are clamped together by SecE at the back. The channel is closed by both a pore ring composed of hydrophobic SecY resides and a short helix (helix 2A) on the extracellular side of the membrane which forms a plug. The plug probably moves laterally to allow the channel to open. The ring and the pore may move independently. The polypeptide is Protein translocase subunit SecY (Borreliella burgdorferi (strain ATCC 35210 / DSM 4680 / CIP 102532 / B31) (Borrelia burgdorferi)).